The chain runs to 264 residues: Phosphatidylinositol transfer protein 1 (264 aa).

A disordered region spans residues N151–E174. Positions V238 to K264 form a coiled coil.

Belongs to the PtdIns transfer protein family. PI transfer class I subfamily. Phosphorylated in response to activation of rasG.

The protein resides in the cytoplasm. It is found in the golgi apparatus. Functionally, catalyzes the transfer of PtdIns and phosphatidylcholine between membranes. The polypeptide is Phosphatidylinositol transfer protein 1 (pitA) (Dictyostelium discoideum (Social amoeba)).